Consider the following 285-residue polypeptide: 2,3,4,5-tetrahydropyridine-2,6-dicarboxylate N-succinyltransferase (285 aa).

Residues Arg-111 and Asp-148 each contribute to the substrate site.

This sequence belongs to the transferase hexapeptide repeat family. In terms of assembly, homotrimer.

Its subcellular location is the cytoplasm. It carries out the reaction (S)-2,3,4,5-tetrahydrodipicolinate + succinyl-CoA + H2O = (S)-2-succinylamino-6-oxoheptanedioate + CoA. It functions in the pathway amino-acid biosynthesis; L-lysine biosynthesis via DAP pathway; LL-2,6-diaminopimelate from (S)-tetrahydrodipicolinate (succinylase route): step 1/3. This is 2,3,4,5-tetrahydropyridine-2,6-dicarboxylate N-succinyltransferase from Rhizobium rhizogenes (strain K84 / ATCC BAA-868) (Agrobacterium radiobacter).